Consider the following 410-residue polypeptide: NADH-quinone oxidoreductase subunit H (410 aa).

Transmembrane regions (helical) follow at residues 11–31 (LVAA…LVAI), 79–99 (FVYF…FAFI), 119–139 (LPVA…GIVL), 160–180 (VISY…MAGT), 192–212 (GVWY…SMVG), 257–277 (ALAA…NMWA), 283–303 (WWPL…YFWL), 317–337 (ALGW…AAII), and 347–367 (YWTP…VLLL). The interval 376–410 (ARASARQRGDEGTSPEPAFPTPPLLAGATKENAGG) is disordered.

This sequence belongs to the complex I subunit 1 family. In terms of assembly, NDH-1 is composed of 14 different subunits. Subunits NuoA, H, J, K, L, M, N constitute the membrane sector of the complex.

It localises to the cell membrane. The catalysed reaction is a quinone + NADH + 5 H(+)(in) = a quinol + NAD(+) + 4 H(+)(out). NDH-1 shuttles electrons from NADH, via FMN and iron-sulfur (Fe-S) centers, to quinones in the respiratory chain. The immediate electron acceptor for the enzyme in this species is believed to be menaquinone. Couples the redox reaction to proton translocation (for every two electrons transferred, four hydrogen ions are translocated across the cytoplasmic membrane), and thus conserves the redox energy in a proton gradient. The chain is NADH-quinone oxidoreductase subunit H from Mycobacterium bovis (strain ATCC BAA-935 / AF2122/97).